The chain runs to 257 residues: Nickel import system ATP-binding protein NikD (257 aa).

One can recognise an ABC transporter domain in the interval 4 to 245 (IDIQNLTIKN…HLHPYTERLI (242 aa)). 37–44 (GESGAGKS) is an ATP binding site.

This sequence belongs to the ABC transporter superfamily. The complex is composed of two ATP-binding proteins (NikD and NikE), two transmembrane proteins (NikB and NikC) and a solute-binding protein (NikA).

Its subcellular location is the cell membrane. It carries out the reaction Ni(2+)(out) + ATP + H2O = Ni(2+)(in) + ADP + phosphate + H(+). Functionally, part of the ABC transporter complex NikABCDE (Opp2) involved in nickel import. Probably responsible for energy coupling to the transport system. This is Nickel import system ATP-binding protein NikD from Staphylococcus aureus (strain MSSA476).